The sequence spans 180 residues: CASP-like protein 5A1 (180 aa).

Residues 1 to 36 (MEVSHPAVHPVAVPPVLTEPPARVRMKDYQGMPGTL) are Cytoplasmic-facing. Residues 37 to 57 (GGLALRLGQLGFAVLSFSIMV) form a helical membrane-spanning segment. Residues 58–67 (STPDFSQVTA) are Extracellular-facing. A helical transmembrane segment spans residues 68–88 (FCYLVAATVLQTLWSSITAVV). At 89–102 (DIYALSVRRSLHHS) the chain is on the cytoplasmic side. The chain crosses the membrane as a helical span at residues 103–123 (LLVGLFAVGDGVTSTLTFAAA). Residues 124–150 (CATAGITVLIDNDLDECGQNHCGRFEA) are Extracellular-facing. Residues 151 to 171 (AAAMAFLSWIMAAPSFLLAFW) traverse the membrane as a helical segment. Over 172 to 180 (SFGNKIVCF) the chain is Cytoplasmic.

Belongs to the Casparian strip membrane proteins (CASP) family. In terms of assembly, homodimer and heterodimers.

It is found in the cell membrane. The polypeptide is CASP-like protein 5A1 (Pteridium aquilinum subsp. aquilinum (Bracken fern)).